Consider the following 503-residue polypeptide: Maturase K (503 aa).

Belongs to the intron maturase 2 family. MatK subfamily.

Its subcellular location is the plastid. It localises to the chloroplast. Usually encoded in the trnK tRNA gene intron. Probably assists in splicing its own and other chloroplast group II introns. This chain is Maturase K, found in Callistemon polandii (Gold-tipped bottlebrush).